The chain runs to 215 residues: Pyrrolidone-carboxylate peptidase (215 aa).

Residues Glu-78, Cys-141, and His-165 contribute to the active site.

Belongs to the peptidase C15 family. As to quaternary structure, homotetramer.

It localises to the cytoplasm. It catalyses the reaction Release of an N-terminal pyroglutamyl group from a polypeptide, the second amino acid generally not being Pro.. Removes 5-oxoproline from various penultimate amino acid residues except L-proline. In Streptococcus pyogenes serotype M3 (strain SSI-1), this protein is Pyrrolidone-carboxylate peptidase.